Consider the following 185-residue polypeptide: Large ribosomal subunit protein uL5 (185 aa).

This sequence belongs to the universal ribosomal protein uL5 family. As to quaternary structure, part of the 50S ribosomal subunit; part of the 5S rRNA/L5/L18/L25 subcomplex. Contacts the 5S rRNA and the P site tRNA. Forms a bridge to the 30S subunit in the 70S ribosome.

This is one of the proteins that bind and probably mediate the attachment of the 5S RNA into the large ribosomal subunit, where it forms part of the central protuberance. In the 70S ribosome it contacts protein S13 of the 30S subunit (bridge B1b), connecting the 2 subunits; this bridge is implicated in subunit movement. Contacts the P site tRNA; the 5S rRNA and some of its associated proteins might help stabilize positioning of ribosome-bound tRNAs. The sequence is that of Large ribosomal subunit protein uL5 from Rhodopseudomonas palustris (strain BisA53).